The chain runs to 343 residues: Isopentenyl-diphosphate delta-isomerase (343 aa).

Residue 9 to 10 (RK) coordinates substrate. Residues S67, 68–70 (AMT), S98, and N127 each bind FMN. 98-100 (SQR) provides a ligand contact to substrate. Residue Q162 coordinates substrate. Position 163 (E163) interacts with Mg(2+). FMN contacts are provided by residues K194, T224, 273–275 (GVR), and 294–295 (AA).

Belongs to the IPP isomerase type 2 family. In terms of assembly, homooctamer. Dimer of tetramers. It depends on FMN as a cofactor. NADPH serves as cofactor. Requires Mg(2+) as cofactor.

The protein resides in the cytoplasm. The catalysed reaction is isopentenyl diphosphate = dimethylallyl diphosphate. Its function is as follows. Involved in the biosynthesis of isoprenoids. Catalyzes the 1,3-allylic rearrangement of the homoallylic substrate isopentenyl (IPP) to its allylic isomer, dimethylallyl diphosphate (DMAPP). The chain is Isopentenyl-diphosphate delta-isomerase from Xanthobacter autotrophicus (strain ATCC BAA-1158 / Py2).